Here is a 240-residue protein sequence, read N- to C-terminus: Mitochondrial transcription rescue factor 1 (240 aa).

Residues 1-83 (MAVPGVRLLT…ECYFPFSIRL (83 aa)) constitute a mitochondrion transit peptide. The interval 92–127 (STKKTLQKEADEEDSDEETSYPERSEQEEELESEPG) is disordered. Residues 101–124 (ADEEDSDEETSYPERSEQEEELES) show a composition bias toward acidic residues. Residues serine 106 and serine 116 each carry the phosphoserine modification. In terms of domain architecture, S4 RNA-binding spans 142–217 (FRYDVILKTG…LKKVYEEKTE (76 aa)).

Monomer. Interacts with POLRMT. Interacts (via S4 domain) with MTRFR (via C-terminus). Associates with mitoribosomal S39 large subunit, peptidyl tRNA and nascent chain.

It localises to the mitochondrion matrix. In terms of biological role, mitochondrial RNA-binding protein involved in mitochondrial transcription regulation. Functions as a protective factor to maintain proper mitochondrial RNA level during stress. Acts at the transcription level and its protective function depends on its RNA binding ability. Part of a mitoribosome-associated quality control pathway that prevents aberrant translation by responding to interruptions during elongation. As heterodimer with MTRF, ejects the unfinished nascent chain and peptidyl transfer RNA (tRNA), respectively, from stalled ribosomes. Recruitment of mitoribosome biogenesis factors to these quality control intermediates suggests additional roles for MTRES1 and MTRF during mitoribosome rescue. The protein is Mitochondrial transcription rescue factor 1 (Mtres1) of Mus musculus (Mouse).